The primary structure comprises 488 residues: MDALKVQILPDNQSSPSSTHMLTKPKSKKATKSIAMLIVASLAITLGLLFVFSSNSVMFSASFLRRSSLHYSVIIDAGSSGTRIHVFGYWFESGKPVFDFGEEHYASLKLSPGLSSYADNPEGASVSVTKLVEFAKGRIPKGKLKKSDIRLMATAGMRLLDVPVQEQILDVTRRVLRSSGFKFQDEWATVISGTDEGIYAWVVANHALGSLGGDPLKTTGIVELGGASAQVTFVPSEHVPPEFSRTISYGNVSYTIYSHSFLDFGQDAAEDKLLESLQNSVAASTGDGIVEDPCTPKGYIYDTHSQKDSSGFLSEESKFKASLQVQAAGDFTKCRSATLAMLQEGKENCAYKHCSIGSTFTPNIQGSFLATENFFHTSKFFGLGEKEWLSEMILAGKRFCGEEWSKLKEKYPTTKDKYLHRYCFSSAYIISMLHDSLGVALDDERIKYASKAGKENIPLDWALGAFILNTDTPTSDYNGKSRKMIGFK.

Residues 1 to 26 (MDALKVQILPDNQSSPSSTHMLTKPK) are disordered. At 1-32 (MDALKVQILPDNQSSPSSTHMLTKPKSKKATK) the chain is on the cytoplasmic side. Over residues 10–21 (PDNQSSPSSTHM) the composition is skewed to polar residues. The chain crosses the membrane as a helical; Signal-anchor for type II membrane protein span at residues 33 to 53 (SIAMLIVASLAITLGLLFVFS). Residues 54 to 488 (SNSVMFSASF…GKSRKMIGFK (435 aa)) lie on the Extracellular side of the membrane. Position 73 to 83 (73 to 83 (VIIDAGSSGTR)) interacts with ATP. The active-site Proton acceptor is the E196. 220–230 (GIVELGGASAQ) is an ATP binding site. Residue N251 is glycosylated (N-linked (GlcNAc...) asparagine).

The protein belongs to the GDA1/CD39 NTPase family. Requires Ca(2+) as cofactor. As to expression, highly expressed in young rosette leaves but only weakly in roots.

The protein localises to the membrane. The catalysed reaction is a ribonucleoside 5'-triphosphate + 2 H2O = a ribonucleoside 5'-phosphate + 2 phosphate + 2 H(+). Catalyzes the hydrolysis of phosphoanhydride bonds of nucleoside tri- and di-phosphates. The polypeptide is Probable apyrase 5 (APY5) (Arabidopsis thaliana (Mouse-ear cress)).